The primary structure comprises 419 residues: Protein FAM181B (419 aa).

The segment at 107 to 157 is disordered; sequence LMGAAPPGPSSPGAADTPAKRPLAGAQTVPVPVPAHGKAAPRREASQAAAA.

Belongs to the FAM181 family.

This chain is Protein FAM181B (FAM181B), found in Bos taurus (Bovine).